Consider the following 103-residue polypeptide: Small ribosomal subunit protein uS10 (103 aa).

The protein belongs to the universal ribosomal protein uS10 family. As to quaternary structure, part of the 30S ribosomal subunit.

Its function is as follows. Involved in the binding of tRNA to the ribosomes. In Idiomarina loihiensis (strain ATCC BAA-735 / DSM 15497 / L2-TR), this protein is Small ribosomal subunit protein uS10.